Here is a 635-residue protein sequence, read N- to C-terminus: Peptidyl-prolyl cis-trans isomerase PASTICCINO1 (635 aa).

The span at 1 to 10 (MAVGDQTEQN) shows a compositional bias: polar residues. The disordered stretch occupies residues 1 to 28 (MAVGDQTEQNYLPKKKKSETEDDKRRKK). 3 PPIase FKBP-type domains span residues 51 to 147 (GDQV…LDFS), 175 to 260 (PYEV…VHFI), and 291 to 383 (DSRL…LGFE). 3 TPR repeats span residues 400-433 (ADKIRSTGNRLFKEGKFELAKAKYEKVLREFNHV), 449-482 (NMLHLNVAACLLKMGEWRKSIETCNKVLEAKPGH), and 483-516 (VKGLYRRGMAYIAGGEYDDARNDFNMMIKVDKSS). Positions 530-546 (KEQEAESKARKQFKGLF) are calmodulin-binding. Positions 569-586 (EVDETKDNDDDETLEEEG) are enriched in acidic residues. The disordered stretch occupies residues 569-593 (EVDETKDNDDDETLEEEGATTVSTE). A helical; Anchor for type IV membrane protein transmembrane segment spans residues 609–629 (VMLQIGIQLGVVLIGILIFQF).

Belongs to the FKBP-type PPIase family. Interacts with calmodulin (CaM). Interacts with RPM1 and NAC089. Interacts with the elongase complex core members KCR1, PAS2 and CER10. Expressed ubiquitously.

It localises to the endoplasmic reticulum membrane. The protein resides in the cytoplasm. The protein localises to the nucleus. The enzyme catalyses [protein]-peptidylproline (omega=180) = [protein]-peptidylproline (omega=0). Its function is as follows. PPIases accelerate the folding of proteins. It catalyzes the cis-trans isomerization of proline imidic peptide bonds in oligopeptides. Essential protein regulating cell division, adhesion and elongation throughout the plant development and embryogenesis. Required for the spatial organization of apical meristems. Involved in the hormonal control of cell division and differentiation mediated by cytokinins and auxin. Regulates the function of NAC089 transcription factor by controlling its targeting to the nucleus upon plant cell division. Interacts with enzymes of the fatty acid elongase complex and favors the generation of very-long-chain fatty acids (VLCFAs) required for polar auxin transport and tissue patterning during plant development. This chain is Peptidyl-prolyl cis-trans isomerase PASTICCINO1 (PAS1), found in Arabidopsis thaliana (Mouse-ear cress).